Reading from the N-terminus, the 599-residue chain is Phosphomethylpyrimidine synthase (599 aa).

Residues 1–16 (MSAASANSVTNPSAWE) are compositionally biased toward polar residues. Disordered stretches follow at residues 1-53 (MSAA…PNDP) and 82-108 (EDTE…GAAS). Residues 87–100 (YAGRERNLADDGRS) are compositionally biased toward basic and acidic residues. Substrate is bound by residues asparagine 192, methionine 221, tyrosine 250, histidine 286, 306 to 308 (SRG), 347 to 350 (DGLR), and glutamate 386. Histidine 390 lines the Zn(2+) pocket. Tyrosine 413 is a substrate binding site. Residue histidine 454 participates in Zn(2+) binding. Residues cysteine 534, cysteine 537, and cysteine 542 each coordinate [4Fe-4S] cluster.

This sequence belongs to the ThiC family. [4Fe-4S] cluster is required as a cofactor.

The enzyme catalyses 5-amino-1-(5-phospho-beta-D-ribosyl)imidazole + S-adenosyl-L-methionine = 4-amino-2-methyl-5-(phosphooxymethyl)pyrimidine + CO + 5'-deoxyadenosine + formate + L-methionine + 3 H(+). Its pathway is cofactor biosynthesis; thiamine diphosphate biosynthesis. In terms of biological role, catalyzes the synthesis of the hydroxymethylpyrimidine phosphate (HMP-P) moiety of thiamine from aminoimidazole ribotide (AIR) in a radical S-adenosyl-L-methionine (SAM)-dependent reaction. The chain is Phosphomethylpyrimidine synthase from Corynebacterium diphtheriae (strain ATCC 700971 / NCTC 13129 / Biotype gravis).